The primary structure comprises 759 residues: Pseudocleavage protein nop-1 (759 aa).

5 disordered regions span residues 1 to 46, 334 to 361, 379 to 413, 440 to 495, and 732 to 759; these read MSAP…SSIF, KIFP…MDKK, LSVN…NLSQ, QSSR…KKER, and ESDG…GAKI. Over residues 10 to 42 the composition is skewed to basic and acidic residues; that stretch reads DIHSDDRDHADHQTKKEKHWFEEKSEQNGENRR. Over residues 448–465 the composition is skewed to low complexity; sequence TGNSSISSGVGSIASGTS. Polar residues predominate over residues 473–482; sequence GSRSGQSISR. Basic and acidic residues predominate over residues 485–495; sequence SRRDDEGKKER. A compositionally biased stretch (polar residues) spans 736 to 759; the sequence is PASSNDDFDTQSTASTSTVFGAKI.

Its subcellular location is the nucleus. It is found in the cytoplasm. The protein resides in the cell cortex. It localises to the cleavage furrow. Its function is as follows. Required for formation of the pseudocleavage furrow during the first cleavage of the embryo and also mediates aster-induced furrowing during cytokinesis. Promotes cortical recruitment of ani-1 and nmy-2 during pseudocleavage and cytokinesis and promotes the accumulation of actin at furrowing regions. Regulates establishment of embryonic cell polarity. This chain is Pseudocleavage protein nop-1 (nop-1), found in Caenorhabditis elegans.